The following is a 164-amino-acid chain: Aspartic proteinase nepenthesin-1 (164 aa).

A Peptidase A1 domain is found at 17 to 164; that stretch reads YLMXLSIGTP…VSFVSAQCGA (148 aa). Asp-35 is an active-site residue. The N-linked (GlcNAc...) asparagine glycan is linked to Asn-93.

This sequence belongs to the peptidase A1 family. As to expression, parenchymal cells surrounding the secretory glands.

The protein localises to the secreted. It catalyses the reaction Similar to pepsin, but also cleaves on either side of Asp and at Lys-|-Arg.. Its activity is regulated as follows. Inhibited by pepstatin and by diazoacetyl-D,L-norleucine methyl ester (DAN) in the presence of Cu(2+) ions. Functionally, extracellular proteinase found in the pitcher fluid of carnivorous plants. Digest prey for nitrogen uptake. This Nepenthes distillatoria (Pitcher plant) protein is Aspartic proteinase nepenthesin-1.